Consider the following 490-residue polypeptide: Sulfate adenylyltransferase (490 aa).

The tract at residues 1 to 165 (MTKALLKDLN…LQAVTPIRHF (165 aa)) is N-terminal. The interval 166 to 390 (DFVEYRYSPA…LRQSYPPKYS (225 aa)) is catalytic. Q193 is a binding site for sulfate. ATP contacts are provided by residues 193–196 (QTRN) and 287–290 (GRDH). Active-site residues include T194, R195, and N196. R195 serves as a coordination point for sulfate. A291 provides a ligand contact to sulfate. Residue M329 coordinates ATP. T356 carries the post-translational modification Phosphothreonine. Residues 391–490 (QGFVLAVPAT…LSQLSDEGYL (100 aa)) are required for oligomerization; adenylyl-sulfate kinase-like.

Belongs to the sulfate adenylyltransferase family. Homohexamer. Dimer of trimers.

The protein resides in the cytoplasm. The catalysed reaction is sulfate + ATP + H(+) = adenosine 5'-phosphosulfate + diphosphate. It participates in sulfur metabolism; hydrogen sulfide biosynthesis; sulfite from sulfate: step 1/3. Catalyzes the first intracellular reaction of sulfate assimilation, forming adenosine-5'-phosphosulfate (APS) from inorganic sulfate and ATP. Plays an important role in sulfate activation as a component of the biosynthesis pathway of sulfur-containing amino acids. This Schizosaccharomyces pombe (strain 972 / ATCC 24843) (Fission yeast) protein is Sulfate adenylyltransferase (sua1).